Consider the following 277-residue polypeptide: Large ribosomal subunit protein uL2 (277 aa).

The tract at residues 222–277 is disordered; sequence GVAMNPIDHPHGGGEGRTSGGRHPVTPWGKPTKGKKTRTNKSTDKFILLSRHKRKK.

Belongs to the universal ribosomal protein uL2 family. In terms of assembly, part of the 50S ribosomal subunit. Forms a bridge to the 30S subunit in the 70S ribosome.

In terms of biological role, one of the primary rRNA binding proteins. Required for association of the 30S and 50S subunits to form the 70S ribosome, for tRNA binding and peptide bond formation. It has been suggested to have peptidyltransferase activity; this is somewhat controversial. Makes several contacts with the 16S rRNA in the 70S ribosome. This Bradyrhizobium sp. (strain ORS 278) protein is Large ribosomal subunit protein uL2.